Reading from the N-terminus, the 1142-residue chain is Nucleoporin nup131 (1142 aa).

Belongs to the nucleoporin Nup133 family. As to quaternary structure, component of the npc107-120 complex which consists of nup85, nup107, nup120, nup131, nup132 and seh1. Interacts with nup107.

It is found in the nucleus. In terms of biological role, functions as a component of the nuclear pore complex (NPC). NPC components, collectively referred to as nucleoporins (NUPs), can play the role of both NPC structural components and of docking or interaction partners for transiently associated nuclear transport factors. Active directional transport is assured by both, a Phe-Gly (FG) repeat affinity gradient for these transport factors across the NPC and a transport cofactor concentration gradient across the nuclear envelope. In Schizosaccharomyces pombe (strain 972 / ATCC 24843) (Fission yeast), this protein is Nucleoporin nup131 (nup131).